We begin with the raw amino-acid sequence, 449 residues long: tRNA-2-methylthio-N(6)-dimethylallyladenosine synthase (449 aa).

In terms of domain architecture, MTTase N-terminal spans 2–119 (KGLFIRTYGC…LPEMIARASR (118 aa)). [4Fe-4S] cluster is bound by residues cysteine 11, cysteine 47, cysteine 82, cysteine 157, cysteine 161, and cysteine 164. Residues 143–378 (EADGPAAFVS…QALLREQQTE (236 aa)) enclose the Radical SAM core domain. Residues 381 to 443 (ASQIGKTLPV…LNSLTGELVR (63 aa)) enclose the TRAM domain.

The protein belongs to the methylthiotransferase family. MiaB subfamily. In terms of assembly, monomer. It depends on [4Fe-4S] cluster as a cofactor.

It localises to the cytoplasm. The catalysed reaction is N(6)-dimethylallyladenosine(37) in tRNA + (sulfur carrier)-SH + AH2 + 2 S-adenosyl-L-methionine = 2-methylsulfanyl-N(6)-dimethylallyladenosine(37) in tRNA + (sulfur carrier)-H + 5'-deoxyadenosine + L-methionine + A + S-adenosyl-L-homocysteine + 2 H(+). Its function is as follows. Catalyzes the methylthiolation of N6-(dimethylallyl)adenosine (i(6)A), leading to the formation of 2-methylthio-N6-(dimethylallyl)adenosine (ms(2)i(6)A) at position 37 in tRNAs that read codons beginning with uridine. The sequence is that of tRNA-2-methylthio-N(6)-dimethylallyladenosine synthase from Hyphomonas neptunium (strain ATCC 15444).